The primary structure comprises 294 residues: Acetyl-coenzyme A carboxylase carboxyl transferase subunit beta (294 aa).

Residues 25 to 294 form the CoA carboxyltransferase N-terminal domain; it reads VWTKCTSCEQ…PLVVPVDGSH (270 aa). Zn(2+)-binding residues include cysteine 29, cysteine 32, cysteine 48, and cysteine 51. Residues 29–51 form a C4-type zinc finger; the sequence is CTSCEQVLYSAELERNLEVCPKC.

Belongs to the AccD/PCCB family. Acetyl-CoA carboxylase is a heterohexamer composed of biotin carboxyl carrier protein (AccB), biotin carboxylase (AccC) and two subunits each of ACCase subunit alpha (AccA) and ACCase subunit beta (AccD). The cofactor is Zn(2+).

The protein resides in the cytoplasm. It carries out the reaction N(6)-carboxybiotinyl-L-lysyl-[protein] + acetyl-CoA = N(6)-biotinyl-L-lysyl-[protein] + malonyl-CoA. It functions in the pathway lipid metabolism; malonyl-CoA biosynthesis; malonyl-CoA from acetyl-CoA: step 1/1. Its function is as follows. Component of the acetyl coenzyme A carboxylase (ACC) complex. Biotin carboxylase (BC) catalyzes the carboxylation of biotin on its carrier protein (BCCP) and then the CO(2) group is transferred by the transcarboxylase to acetyl-CoA to form malonyl-CoA. This is Acetyl-coenzyme A carboxylase carboxyl transferase subunit beta from Aliivibrio fischeri (strain ATCC 700601 / ES114) (Vibrio fischeri).